Here is a 475-residue protein sequence, read N- to C-terminus: Melanopsin (475 aa).

The Extracellular segment spans residues 1–21 (MGTQHRIKVDVPDRVLYTVGS). A helical transmembrane segment spans residues 22-42 (CVLVIGSIGITGNLLVLYAFY). Residues 43–53 (SNKRLRTPANY) are Cytoplasmic-facing. Residues 54-74 (FIMNLAASDFLMSATQAPICF) traverse the membrane as a helical segment. Residues 75–90 (LNSMHTEWILGDIGCN) are Extracellular-facing. Cysteine 89 and cysteine 167 are oxidised to a cystine. A helical membrane pass occupies residues 91-111 (FYVFCGALFGITSMMTLLAIS). Topologically, residues 112 to 134 (VDRYCVITKPLQSIKRSSKKRSC) are cytoplasmic. Residues 135 to 155 (IIIAFVWLYSLGWSVCPLFGW) traverse the membrane as a helical segment. Residues 156–187 (SSYIPEGLMISCTWDYVSYSPANRSYTMMLCC) lie on the Extracellular side of the membrane. Residue asparagine 178 is glycosylated (N-linked (GlcNAc...) asparagine). Residues 188-208 (FVFFIPLIIIFHCYLFMFLAI) form a helical membrane-spanning segment. Over 209 to 240 (RSTGRNVQKLGSTYNRKSNVSQSVKSEWKLAK) the chain is Cytoplasmic. Residues 241 to 261 (IAFVAIVVFVLSWSPYACVTL) traverse the membrane as a helical segment. Topologically, residues 262 to 276 (IAWAGYAKTLNPYSK) are extracellular. A helical membrane pass occupies residues 277–297 (SVPAVIAKASAIYNPIIYAII). Lysine 284 carries the N6-(retinylidene)lysine modification. The Cytoplasmic portion of the chain corresponds to 298–475 (HPRYRRTIRS…EQHQMEASSH (178 aa)). Disordered stretches follow at residues 370–390 (VEAARKKQQPHRSRSFSKQAE) and 445–475 (PFGLNSSSTEENADTSDMEVQEQHQMEASSH). Residues 375-384 (KKQQPHRSRS) are compositionally biased toward basic residues. Polar residues predominate over residues 445–454 (PFGLNSSSTE). Positions 455 to 464 (ENADTSDMEV) are enriched in acidic residues. The span at 465–475 (QEQHQMEASSH) shows a compositional bias: basic and acidic residues.

Belongs to the G-protein coupled receptor 1 family. Opsin subfamily. In terms of tissue distribution, highest level in the lateral eye. Low level in the brain.

It localises to the cell membrane. Photoreceptor implicated in non-image-forming responses to light. May be able to isomerize covalently bound all-trans retinal back to 11-cis retinal. The protein is Melanopsin (OPN4) of Podarcis siculus (Italian wall lizard).